The primary structure comprises 389 residues: PqqA peptide cyclase (389 aa).

Residues 19–235 (VGLPLWLLAE…NEYRVRLEAE (217 aa)) enclose the Radical SAM core domain. The [4Fe-4S] cluster site is built by cysteine 33, cysteine 37, and cysteine 40.

The protein belongs to the radical SAM superfamily. PqqE family. In terms of assembly, interacts with PqqD. The interaction is necessary for activity of PqqE. It depends on [4Fe-4S] cluster as a cofactor.

It catalyses the reaction [PQQ precursor protein] + S-adenosyl-L-methionine = E-Y cross-linked-[PQQ precursor protein] + 5'-deoxyadenosine + L-methionine + H(+). It functions in the pathway cofactor biosynthesis; pyrroloquinoline quinone biosynthesis. Its function is as follows. Catalyzes the cross-linking of a glutamate residue and a tyrosine residue in the PqqA protein as part of the biosynthesis of pyrroloquinoline quinone (PQQ). This is PqqA peptide cyclase from Pseudomonas savastanoi pv. phaseolicola (strain 1448A / Race 6) (Pseudomonas syringae pv. phaseolicola (strain 1448A / Race 6)).